Here is a 245-residue protein sequence, read N- to C-terminus: Ribosomal RNA small subunit methyltransferase G (245 aa).

S-adenosyl-L-methionine contacts are provided by residues glycine 79, phenylalanine 84, 130–131, and arginine 150; that span reads AE.

The protein belongs to the methyltransferase superfamily. RNA methyltransferase RsmG family.

It localises to the cytoplasm. Its function is as follows. Specifically methylates the N7 position of a guanine in 16S rRNA. The protein is Ribosomal RNA small subunit methyltransferase G of Limosilactobacillus fermentum (strain NBRC 3956 / LMG 18251) (Lactobacillus fermentum).